A 580-amino-acid polypeptide reads, in one-letter code: Guanine nucleotide-binding protein alpha-4 subunit (580 aa).

Residues 1–10 are compositionally biased toward polar residues; that stretch reads MSPSVSSPQL. A disordered region spans residues 1-28; the sequence is MSPSVSSPQLRHTKSNRAISRIDRTDPL. A G-alpha domain is found at 93–579; the sequence is RVYKMVLLGQ…RENLKLTGLV (487 aa). The tract at residues 96-109 is G1 motif; sequence KMVLLGQAGAGKTT. 101-108 is a binding site for GTP; the sequence is GQAGAGKT. Disordered stretches follow at residues 160 to 196 and 302 to 325; these read KSSE…PNDA and GRAA…KDNS. The span at 167 to 183 shows a compositional bias: low complexity; it reads LESSTSASTSTSASASS. The G2 motif stretch occupies residues 387 to 395; it reads DILHSRVRT. GTP is bound by residues 389–395, 415–419, 484–487, and Ala-551; these read LHSRVRT, DVGGS, and NKID. A Mg(2+)-binding site is contributed by Thr-395. Residues 411-420 are G3 motif; sequence YRIYDVGGSR. Residues 480–487 are G4 motif; it reads ILFLNKID. The interval 549-554 is G5 motif; the sequence is TVATST.

Belongs to the G-alpha family. In terms of assembly, g proteins are composed of 3 units; alpha, beta and gamma. The alpha chain contains the guanine nucleotide binding site.

Guanine nucleotide-binding proteins (G proteins) are involved as modulators or transducers in various transmembrane signaling systems. This Mycosarcoma maydis (Corn smut fungus) protein is Guanine nucleotide-binding protein alpha-4 subunit (GPA4).